The sequence spans 338 residues: Glyceraldehyde-3-phosphate dehydrogenase, cytosolic (338 aa).

NAD(+) contacts are provided by residues 14-15, Asp-36, and Arg-83; that span reads RI. D-glyceraldehyde 3-phosphate contacts are provided by residues 154–156, Thr-185, 214–215, and Arg-237; these read SCT and TG. Cys-155 functions as the Nucleophile in the catalytic mechanism. Position 319 (Asn-319) interacts with NAD(+).

The protein belongs to the glyceraldehyde-3-phosphate dehydrogenase family. In terms of assembly, homotetramer.

The protein localises to the cytoplasm. It carries out the reaction D-glyceraldehyde 3-phosphate + phosphate + NAD(+) = (2R)-3-phospho-glyceroyl phosphate + NADH + H(+). Its pathway is carbohydrate degradation; glycolysis; pyruvate from D-glyceraldehyde 3-phosphate: step 1/5. Key enzyme in glycolysis that catalyzes the first step of the pathway by converting D-glyceraldehyde 3-phosphate (G3P) into 3-phospho-D-glyceroyl phosphate. Essential for the maintenance of cellular ATP levels and carbohydrate metabolism. This Ranunculus acris (Meadow buttercup) protein is Glyceraldehyde-3-phosphate dehydrogenase, cytosolic (GAPC).